The following is a 250-amino-acid chain: 5'-nucleotidase SurE (250 aa).

Residues aspartate 8, aspartate 9, serine 40, and asparagine 94 each contribute to the a divalent metal cation site.

It belongs to the SurE nucleotidase family. A divalent metal cation serves as cofactor.

The protein resides in the cytoplasm. The enzyme catalyses a ribonucleoside 5'-phosphate + H2O = a ribonucleoside + phosphate. Functionally, nucleotidase that shows phosphatase activity on nucleoside 5'-monophosphates. The protein is 5'-nucleotidase SurE of Wolbachia sp. subsp. Drosophila simulans (strain wRi).